The primary structure comprises 400 residues: ATP-dependent RNA helicase fal-1 (400 aa).

Positions 26–54 match the Q motif motif; it reads PTFESMSLKESLLRGIYAYGYESPSAVQS. One can recognise a Helicase ATP-binding domain in the interval 57–227; it reads IVQICKGRDT…TKFMTDPVRI (171 aa). Position 70–77 (70–77) interacts with ATP; that stretch reads AQSGTGKT. The DEAD box signature appears at 175-178; it reads DEAD. One can recognise a Helicase C-terminal domain in the interval 238–399; it reads GLKQYFIAVE…EMPMNVADLI (162 aa).

It belongs to the DEAD box helicase family. DDX48/FAL1 subfamily.

It localises to the nucleus. The protein localises to the nucleolus. It catalyses the reaction ATP + H2O = ADP + phosphate + H(+). ATP-dependent RNA helicase involved in 40S ribosomal subunit biogenesis. Required for the processing and cleavage of 35S pre-rRNA at sites A0, A1, and A2, leading to mature 18S rRNA. The protein is ATP-dependent RNA helicase fal-1 (fal-1) of Neurospora crassa (strain ATCC 24698 / 74-OR23-1A / CBS 708.71 / DSM 1257 / FGSC 987).